The sequence spans 1565 residues: Major cell-surface adhesin PAc (1565 aa).

Positions 1 to 38 are cleaved as a signal peptide; the sequence is MKVKKTYGFRKSKISKTLCGAVLGTVAAVSVAGQKVFA. Residues 42–54 are compositionally biased toward low complexity; that stretch reads TTTSDVDTKVVGT. The segment at 42–81 is disordered; sequence TTTSDVDTKVVGTQTGNPATNLPEAQGSASKEAEQSQTKL. Residues 72-81 are compositionally biased toward basic and acidic residues; sequence KEAEQSQTKL. 4 Ag I/II A repeats span residues 146-220, 221-302, 303-384, and 385-466; these read KKTT…QKTN, AANQ…QEAN, AANE…KKAN, and AANE…QKDL. The tract at residues 203–448 is heptad repeats of Y-[EQ]-X-X-L-A-X; sequence EAKLAQYQAD…KRNADAKADY (246 aa). The interval 461-834 is V-region (lectin-like); sequence KYQKDLADYP…VNVPKVTKEK (374 aa). Disordered stretches follow at residues 827–985 and 1486–1511; these read VPKV…PTPP and NTVK…PRTS. Residues 848-887 form a P1 repeat; sequence TYETEKPLKPAPVAPNYEKEPTPPTRTPDQAEPNKPTPPT. One copy of the P2 repeat lies at 888–926; sequence YETEKPLEPAPVEPSYEAEPTPPTRTPDQAEPNKPTPPT. One copy of the P3 repeat lies at 927–964; the sequence is YETEKPLEPAPVEPSYEAEPTPPTPTPDQPEPNKPVEP. A compositionally biased stretch (pro residues) spans 946 to 961; it reads PTPPTPTPDQPEPNKP. Residues 1532-1536 carry the LPXTG sorting signal motif; sequence LPNTG. T1535 carries the pentaglycyl murein peptidoglycan amidated threonine modification. Residues 1536-1565 constitute a propeptide, removed by sortase; that stretch reads GVTNNAYMPLLGIIGLVTSFSLLGLKAKKD.

Belongs to the antigen I/II family.

It is found in the secreted. The protein resides in the cell wall. Surface protein antigen implicated in dental caries. The chain is Major cell-surface adhesin PAc from Streptococcus mutans.